The sequence spans 315 residues: FAD-linked oxidoreductase sthB (315 aa).

The FAD-binding PCMH-type domain maps to 19-201 (QPCSLGNYVS…LSMTSRVHAD (183 aa)).

It belongs to the oxygen-dependent FAD-linked oxidoreductase family.

It catalyses the reaction betaenone C = betaenone A. The catalysed reaction is stemphyloxin I = stemphyloxin II. It functions in the pathway mycotoxin biosynthesis. FAD-linked oxidoreductase; part of the gene cluster that mediates the biosynthesis of the phytotoxin stemphyloxin II. The first step of the pathway is the synthesis of dehydroprobetaenone I by the polyketide synthase sthA and the enoyl reductase sthE via condensation of one acetyl-CoA starter unit with 7 malonyl-CoA units and 5 methylations. The C-terminal reductase (R) domain of sthA catalyzes the reductive release of the polyketide chain. Because sthA lacks a designated enoylreductase (ER) domain, the required activity is provided the enoyl reductase sthE. The short-chain dehydrogenase/reductase sthC then catalyzes reduction of dehydroprobetaenone I to probetaenone I. The cytochrome P450 monooxygenase sthF catalyzes successive epoxidation, oxidation (resulting from epoxide opening) and hydroxylation to install a tertiary alcohol in the decaline ring to yield betaenone C from dehydroprobetaenone I and betaenone B from probetaenone I. The FAD-linked oxidoreductase sthB is responsible for the conversion of betaenone C to betaenone A via an intramolecular aldol reaction between C-1 and C-17 to form the bridged tricyclic system in betaenone A. Finally, the cytochrome P450 monooxygenase sthD catalyzes the hydroxylation of C-15 to afford the final metabolite stemphyloxin II. The polypeptide is FAD-linked oxidoreductase sthB (Phaeosphaeria nodorum (strain SN15 / ATCC MYA-4574 / FGSC 10173) (Glume blotch fungus)).